The primary structure comprises 354 residues: 3'-5' exonuclease (354 aa).

Positions 1–120 (MEKYLIKMPI…PSPEKEKPEK (120 aa)) are disordered. Basic and acidic residues predominate over residues 36 to 50 (TKKDTPKELKDKENA). Basic residues predominate over residues 59-70 (TKGRPGRPAVKR). Residues 71-91 (KNLDNPDAKAEKKATEEENPP) show a composition bias toward basic and acidic residues. 3 positions are modified to phosphoserine: S104, S110, and S112. Positions 146–314 (VLQWVEKQKD…GQVIYRELER (169 aa)) constitute a 3'-5' exonuclease domain. Mg(2+) contacts are provided by D163, E165, and D301.

This sequence belongs to the WRNexo family.

It localises to the nucleus. Functionally, has exonuclease activity on both single-stranded and duplex templates bearing overhangs, but not blunt ended duplex DNA, and cleaves in a 3'-5' direction. Essential for the formation of DNA replication focal centers. Has an important role in maintaining genome stability. In Drosophila yakuba (Fruit fly), this protein is 3'-5' exonuclease.